Here is a 348-residue protein sequence, read N- to C-terminus: Neutral peroxidase (348 aa).

The first 20 residues, 1-20, serve as a signal peptide directing secretion; the sequence is MASFVARLTLALSFIALALA. Residues 21 to 67 constitute a propeptide that is removed on maturation; the sequence is GYSLVQNTLSSPTHTRLNLIPTWLDSTFDSADVLSYLGFGKSSGRLS. 4 disulfide bridges follow: cysteine 71-cysteine 149, cysteine 102-cysteine 107, cysteine 156-cysteine 344, and cysteine 235-cysteine 256. Histidine 100 acts as the Proton acceptor in catalysis. 4 residues coordinate Ca(2+): aspartate 101, valine 104, glycine 106, and aspartate 108. 5 N-linked (GlcNAc...) asparagine glycosylation sites follow: asparagine 114, asparagine 118, asparagine 173, asparagine 177, and asparagine 189. Proline 198 serves as a coordination point for substrate. N-linked (GlcNAc...) asparagine glycosylation is present at asparagine 203. Histidine 228 provides a ligand contact to heme b. Threonine 229 provides a ligand contact to Ca(2+). Asparagine 247 and asparagine 261 each carry an N-linked (GlcNAc...) asparagine glycan. Residues aspartate 269, serine 271, and aspartate 276 each contribute to the Ca(2+) site. Asparagine 300 is a glycosylation site (N-linked (GlcNAc...) asparagine).

It belongs to the peroxidase family. Classical plant (class III) peroxidase subfamily. It depends on Ca(2+) as a cofactor. The cofactor is heme b. Highly expressed in suspension cultured cells. Weak expression also found in the stems of intact plants. No expression in leaf, tuberous root and non-tuberous root.

The protein resides in the secreted. The enzyme catalyses 2 a phenolic donor + H2O2 = 2 a phenolic radical donor + 2 H2O. In terms of biological role, removal of H(2)O(2), oxidation of toxic reductants, biosynthesis and degradation of lignin, suberization, auxin catabolism, response to environmental stresses such as wounding, pathogen attack and oxidative stress. These functions might be dependent on each isozyme/isoform in each plant tissue. May contribute to protection against cold-induced oxidative stress. This chain is Neutral peroxidase, found in Ipomoea batatas (Sweet potato).